Consider the following 130-residue polypeptide: Small ribosomal subunit protein uS9 (130 aa).

Belongs to the universal ribosomal protein uS9 family.

The polypeptide is Small ribosomal subunit protein uS9 (Bordetella avium (strain 197N)).